The primary structure comprises 239 residues: Glycerol-3-phosphate acyltransferase (239 aa).

6 helical membrane passes run 6–26, 61–81, 99–119, 135–155, 159–179, and 199–219; these read AIALLIVFSLVIGYLMGSVMF, FLVGLCDALKGFLAFVFSFLI, YYLTYLSCFAATIGHIFPLYF, LAISLWWFVICLVLWLLVTLI, VSLASLVTFFILAIIILVPWL, and WYIILFFVLWYWPLTIAVFWL.

Belongs to the PlsY family. In terms of assembly, probably interacts with PlsX.

The protein resides in the cell membrane. It carries out the reaction an acyl phosphate + sn-glycerol 3-phosphate = a 1-acyl-sn-glycero-3-phosphate + phosphate. The protein operates within lipid metabolism; phospholipid metabolism. Functionally, catalyzes the transfer of an acyl group from acyl-phosphate (acyl-PO(4)) to glycerol-3-phosphate (G3P) to form lysophosphatidic acid (LPA). This enzyme utilizes acyl-phosphate as fatty acyl donor, but not acyl-CoA or acyl-ACP. In Mycoplasma pneumoniae (strain ATCC 29342 / M129 / Subtype 1) (Mycoplasmoides pneumoniae), this protein is Glycerol-3-phosphate acyltransferase.